We begin with the raw amino-acid sequence, 315 residues long: Acetyl-coenzyme A carboxylase carboxyl transferase subunit alpha (315 aa).

The CoA carboxyltransferase C-terminal domain occupies 40–293; the sequence is LQDKSKTLTE…REELSSQLAM (254 aa).

The protein belongs to the AccA family. Acetyl-CoA carboxylase is a heterohexamer composed of biotin carboxyl carrier protein (AccB), biotin carboxylase (AccC) and two subunits each of ACCase subunit alpha (AccA) and ACCase subunit beta (AccD).

The protein resides in the cytoplasm. It catalyses the reaction N(6)-carboxybiotinyl-L-lysyl-[protein] + acetyl-CoA = N(6)-biotinyl-L-lysyl-[protein] + malonyl-CoA. Its pathway is lipid metabolism; malonyl-CoA biosynthesis; malonyl-CoA from acetyl-CoA: step 1/1. Its function is as follows. Component of the acetyl coenzyme A carboxylase (ACC) complex. First, biotin carboxylase catalyzes the carboxylation of biotin on its carrier protein (BCCP) and then the CO(2) group is transferred by the carboxyltransferase to acetyl-CoA to form malonyl-CoA. This chain is Acetyl-coenzyme A carboxylase carboxyl transferase subunit alpha, found in Pseudomonas savastanoi pv. phaseolicola (strain 1448A / Race 6) (Pseudomonas syringae pv. phaseolicola (strain 1448A / Race 6)).